The primary structure comprises 318 residues: Peptidyl-prolyl cis-trans isomerase CPR4 (318 aa).

Residues 1 to 20 (MWLKSLLLCLYSLVLCQVHA) form the signal peptide. The PPIase cyclophilin-type domain maps to 55-225 (YFDPVSKSMK…HELRFLYFVL (171 aa)). Asparagine 166 carries N-linked (GlcNAc...) asparagine glycosylation. The helical transmembrane segment at 286–303 (ISRALMCLTVLGLCFIAY) threads the bilayer.

Its subcellular location is the membrane. It carries out the reaction [protein]-peptidylproline (omega=180) = [protein]-peptidylproline (omega=0). Functionally, PPIases accelerate the folding of proteins. It catalyzes the cis-trans isomerization of proline imidic peptide bonds in oligopeptides. This chain is Peptidyl-prolyl cis-trans isomerase CPR4 (CPR4), found in Saccharomyces cerevisiae (strain ATCC 204508 / S288c) (Baker's yeast).